The primary structure comprises 187 residues: Elongation factor P (187 aa).

It belongs to the elongation factor P family.

It localises to the cytoplasm. It functions in the pathway protein biosynthesis; polypeptide chain elongation. Its function is as follows. Involved in peptide bond synthesis. Stimulates efficient translation and peptide-bond synthesis on native or reconstituted 70S ribosomes in vitro. Probably functions indirectly by altering the affinity of the ribosome for aminoacyl-tRNA, thus increasing their reactivity as acceptors for peptidyl transferase. This Leifsonia xyli subsp. xyli (strain CTCB07) protein is Elongation factor P.